The following is a 105-amino-acid chain: Putative membrane protein insertion efficiency factor (105 aa).

The protein belongs to the UPF0161 family.

It localises to the cell membrane. Functionally, could be involved in insertion of integral membrane proteins into the membrane. This Bifidobacterium longum subsp. infantis (strain ATCC 15697 / DSM 20088 / JCM 1222 / NCTC 11817 / S12) protein is Putative membrane protein insertion efficiency factor.